The following is a 108-amino-acid chain: Large ribosomal subunit protein uL24 (108 aa).

This sequence belongs to the universal ribosomal protein uL24 family. As to quaternary structure, part of the 50S ribosomal subunit.

One of two assembly initiator proteins, it binds directly to the 5'-end of the 23S rRNA, where it nucleates assembly of the 50S subunit. Its function is as follows. One of the proteins that surrounds the polypeptide exit tunnel on the outside of the subunit. The protein is Large ribosomal subunit protein uL24 of Mycoplasma capricolum subsp. capricolum (strain California kid / ATCC 27343 / NCTC 10154).